The primary structure comprises 305 residues: Serine/threonine-protein kinase 16 (305 aa).

Glycine 2 is lipidated: N-myristoyl glycine. Residues cysteine 6 and cysteine 8 are each lipidated (S-palmitoyl cysteine). A Protein kinase domain is found at 20-293 (YLFVQKLGEG…PVLLSQLEAL (274 aa)). Residues 26–34 (LGEGGFSYV) and lysine 49 each bind ATP. The active-site Proton acceptor is the aspartate 148. The segment at 166-202 (DLGSMNQACIQVEGSRQALALQDWAAQRCTISYRAPE) is activation loop. At serine 197 the chain carries Phosphoserine; by autocatalysis. Residue tyrosine 198 is modified to Phosphotyrosine; by autocatalysis.

The protein belongs to the protein kinase superfamily. Ser/Thr protein kinase family. In terms of assembly, monomer. Interacts with DRG1 (via its N-terminal); the interaction phosphorylates DRG1. Post-translationally, mainly autophosphorylated on serine/threonine residues. Also autophosphorylated on Tyr-198. Expressed in heart, liver, brain, spleen, lung, skeletal muscle, kidney and testis.

Its subcellular location is the cytoplasm. The protein localises to the perinuclear region. It is found in the membrane. It carries out the reaction L-seryl-[protein] + ATP = O-phospho-L-seryl-[protein] + ADP + H(+). The enzyme catalyses L-threonyl-[protein] + ATP = O-phospho-L-threonyl-[protein] + ADP + H(+). It catalyses the reaction L-tyrosyl-[protein] + ATP = O-phospho-L-tyrosyl-[protein] + ADP + H(+). Membrane-associated protein kinase that phosphorylates on serine and threonine residues. In vitro substrates include DRG1, ENO1 and EIF4EBP1. Also autophosphorylates. May be involved in secretory vesicle trafficking or intracellular signaling. May have a role in regulating stromal-epithelial interactions that occur during ductal morphogenesis in the mammary gland. May be involved in TGF-beta signaling. Able to autophosphorylate on Tyr residue; it is however unclear whether it has tyrosine-protein kinase toward other proteins. The sequence is that of Serine/threonine-protein kinase 16 (Stk16) from Rattus norvegicus (Rat).